The sequence spans 1807 residues: Phospholipase D (1807 aa).

The interval 1-28 (MPGPDDDVREPTAAARTNNSGYGLRAAP) is disordered. 3 helical membrane-spanning segments follow: residues 257 to 277 (IAFV…IVTS), 305 to 325 (AGVF…VFVY), and 587 to 607 (VYYI…GFLA). The disordered stretch occupies residues 697–734 (TASRMGTGNLAPASSRVDSSTQSEDSFEAPKPPPSSVS). 2 PLD phosphodiesterase domains span residues 853–880 (GFWS…CFGR) and 1249–1276 (EQIY…NDRS). Catalysis depends on residues His-858, Lys-860, Asp-865, His-1254, Lys-1256, and Asp-1261. Polar residues-rich tracts occupy residues 1531–1547 (FSRS…SQLD), 1568–1578 (YNSNSMPSNAS), and 1597–1614 (YPNS…QSPA). The disordered stretch occupies residues 1531 to 1621 (FSRSNSVSTP…SPAIATGARS (91 aa)).

It belongs to the phospholipase D family. TM-PLD subfamily.

It localises to the membrane. It catalyses the reaction a 1,2-diacyl-sn-glycero-3-phosphocholine + H2O = a 1,2-diacyl-sn-glycero-3-phosphate + choline + H(+). In terms of biological role, hydrolyzes glycerol-phospholipids at the terminal phosphodiesteric bond. In Phytophthora infestans (Potato late blight agent), this protein is Phospholipase D.